The sequence spans 281 residues: MENPSSNLEKLQQDCYNEWMSLQAKRITELKEAISTGEKDDNKLLDLIRTAIRDFGDYARKRSEHSRRFSSNYFAPTWNTCLENALLWMGGCRPSSFIRLVYAMCGSQTEHRLTNFFNNTNHDIDSNLSMALGETRGGIGGGESMSDLTAEQLFKINELHLKTVEAENKLTKVSASLQEDTADTPIAVAAFYKEVIGQADVVVERALDKHEEDMGGLLVEADKLRMTTLTKIVDILTAVQAADFLLAGKKLHLAMHEWGKSREHRRLEASGGDSGGNVTRE.

A DOG1 domain is found at 9 to 265 (EKLQQDCYNE…HEWGKSREHR (257 aa)). Positions 262 to 281 (REHRRLEASGGDSGGNVTRE) are disordered.

This chain is Protein DOG1-like 1, found in Arabidopsis thaliana (Mouse-ear cress).